A 39-amino-acid polypeptide reads, in one-letter code: Photosystem II reaction center protein Y (39 aa).

A helical transmembrane segment spans residues 4-22; the sequence is TLVVFAPIIAALAWVIFNI.

Belongs to the PsbY family. In terms of assembly, PSII is composed of 1 copy each of membrane proteins PsbA, PsbB, PsbC, PsbD, PsbE, PsbF, PsbH, PsbI, PsbJ, PsbK, PsbL, PsbM, PsbT, PsbX, PsbY, Psb30/Ycf12, peripheral proteins PsbO, CyanoQ (PsbQ), PsbU, PsbV and a large number of cofactors. It forms dimeric complexes.

It is found in the cellular thylakoid membrane. Functionally, loosely associated component of the core of photosystem II (PSII), it is not always seen in crystals. PSII is a light-driven water plastoquinone oxidoreductase, using light energy to abstract electrons from H(2)O, generating a proton gradient subsequently used for ATP formation. In Prochlorococcus marinus (strain MIT 9515), this protein is Photosystem II reaction center protein Y.